Reading from the N-terminus, the 501-residue chain is Cytochrome P450 90A3 (501 aa).

A helical transmembrane segment spans residues 2-22 (AAAALLLLAAAAAIVVVAMVL). Residue C446 coordinates heme.

This sequence belongs to the cytochrome P450 family. Heme serves as cofactor. As to expression, highly expressed in shoot apex and inflorenscence. Expressed in roots, stems, leaf blades and leaf sheaths.

The protein resides in the membrane. Its pathway is plant hormone biosynthesis; brassinosteroid biosynthesis. Functionally, catalyzes the C23-alpha-hydroxylation step in brassinosteroid biosynthesis. Converts 6-deoxocathasterone (6-deoxoCT) to 6-deoxoteasterone (6-deoxoTE) in the late C6-oxidation pathway and cathasterone (CT) to teasterone (TE) in the early C6-oxidation pathway of brassinolide (BL) biosynthesis. The protein is Cytochrome P450 90A3 of Oryza sativa subsp. japonica (Rice).